We begin with the raw amino-acid sequence, 319 residues long: Acetyl-coenzyme A carboxylase carboxyl transferase subunit alpha (319 aa).

The CoA carboxyltransferase C-terminal domain maps to 43 to 296 (LKQKSVELTQ…KTQLLLDLVE (254 aa)).

This sequence belongs to the AccA family. In terms of assembly, acetyl-CoA carboxylase is a heterohexamer composed of biotin carboxyl carrier protein (AccB), biotin carboxylase (AccC) and two subunits each of ACCase subunit alpha (AccA) and ACCase subunit beta (AccD).

The protein resides in the cytoplasm. It catalyses the reaction N(6)-carboxybiotinyl-L-lysyl-[protein] + acetyl-CoA = N(6)-biotinyl-L-lysyl-[protein] + malonyl-CoA. The protein operates within lipid metabolism; malonyl-CoA biosynthesis; malonyl-CoA from acetyl-CoA: step 1/1. Functionally, component of the acetyl coenzyme A carboxylase (ACC) complex. First, biotin carboxylase catalyzes the carboxylation of biotin on its carrier protein (BCCP) and then the CO(2) group is transferred by the carboxyltransferase to acetyl-CoA to form malonyl-CoA. The protein is Acetyl-coenzyme A carboxylase carboxyl transferase subunit alpha of Blochmanniella floridana.